The sequence spans 162 residues: Protein A49R (162 aa).

Belongs to the poxviridae A49 protein family. In terms of assembly, interacts with host BTRC; this interaction inhibits NF-kappa-B activation.

The protein localises to the host cytoplasm. Its subcellular location is the host nucleus. Plays a role in the inhibition of host NF-kappa-B activation. Interacts with host BTRC and thereby diminishes ubiquitination of NF-kappa-B inhibitor alpha/NFKBIA. This stabilizes NFKBIA and its interaction with NF-kappaB, so retaining p65/RELA in the cytoplasm and preventing NF-kappa-B-dependent gene expression. This chain is Protein A49R, found in Bos taurus (Bovine).